Reading from the N-terminus, the 310-residue chain is Ribosomal RNA small subunit methyltransferase H (310 aa).

S-adenosyl-L-methionine is bound by residues 32–34 (AGH), D51, F78, D99, and Q106. Residues 290 to 310 (GELEDNRRSRSAKLRVAEKQK) form a disordered region.

Belongs to the methyltransferase superfamily. RsmH family.

The protein resides in the cytoplasm. The catalysed reaction is cytidine(1402) in 16S rRNA + S-adenosyl-L-methionine = N(4)-methylcytidine(1402) in 16S rRNA + S-adenosyl-L-homocysteine + H(+). Specifically methylates the N4 position of cytidine in position 1402 (C1402) of 16S rRNA. The polypeptide is Ribosomal RNA small subunit methyltransferase H (Exiguobacterium sp. (strain ATCC BAA-1283 / AT1b)).